The following is a 314-amino-acid chain: Olfactory receptor 52B4 (314 aa).

The Extracellular portion of the chain corresponds to 1–27; it reads MPTVNHSGTSHTVFHLLGIPGLQDQHM. Asparagine 5 carries an N-linked (GlcNAc...) asparagine glycan. The helical transmembrane segment at 28–48 threads the bilayer; sequence WISIPFFISYVTALLGNSLLI. The Cytoplasmic portion of the chain corresponds to 49–56; sequence FIILTKRS. Residues 57-77 form a helical membrane-spanning segment; that stretch reads LHEPMYLFLCMLAGADIVLST. The Extracellular segment spans residues 78 to 101; that stretch reads CTIPQALAIFWFRAGDISLDRCIT. Cysteine 99 and cysteine 191 are oxidised to a cystine. Residues 102–122 form a helical membrane-spanning segment; that stretch reads QLFFIHSTFISESGILLVMAF. The Cytoplasmic segment spans residues 123–141; it reads DHYIAICYPLRYTTILTNA. The helical transmembrane segment at 142–162 threads the bilayer; sequence LIKKICVTVSLRSYGTIFPII. Residues 163-198 lie on the Extracellular side of the membrane; that stretch reads FLLKRLTFCQNNIIPHTFCEHIGLAKYACNDIRINI. A helical transmembrane segment spans residues 199 to 219; it reads WYGFSILMSTVVLDVVLIFIS. Residues 220 to 239 lie on the Cytoplasmic side of the membrane; sequence YMLILHAVFHMPSPDACHKA. The chain crosses the membrane as a helical span at residues 240 to 260; sequence LNTFGSHVCIIILFYGSGIFT. Topologically, residues 261-275 are extracellular; it reads ILTQRFGRHIPPCIH. A helical membrane pass occupies residues 276 to 296; the sequence is IPLANVCILAPPMLNPIIYGI. Residues 297-314 lie on the Cytoplasmic side of the membrane; sequence KTKQIQEQVVQFLFIKQK.

This sequence belongs to the G-protein coupled receptor 1 family.

It is found in the cell membrane. Functionally, odorant receptor. This is Olfactory receptor 52B4 (OR52B4) from Homo sapiens (Human).